The chain runs to 145 residues: D-aminoacyl-tRNA deacylase (145 aa).

The Gly-cisPro motif, important for rejection of L-amino acids motif lies at Gly-137 to Pro-138.

The protein belongs to the DTD family. As to quaternary structure, homodimer.

The protein resides in the cytoplasm. The enzyme catalyses glycyl-tRNA(Ala) + H2O = tRNA(Ala) + glycine + H(+). It carries out the reaction a D-aminoacyl-tRNA + H2O = a tRNA + a D-alpha-amino acid + H(+). An aminoacyl-tRNA editing enzyme that deacylates mischarged D-aminoacyl-tRNAs. Also deacylates mischarged glycyl-tRNA(Ala), protecting cells against glycine mischarging by AlaRS. Acts via tRNA-based rather than protein-based catalysis; rejects L-amino acids rather than detecting D-amino acids in the active site. By recycling D-aminoacyl-tRNA to D-amino acids and free tRNA molecules, this enzyme counteracts the toxicity associated with the formation of D-aminoacyl-tRNA entities in vivo and helps enforce protein L-homochirality. This is D-aminoacyl-tRNA deacylase from Shewanella denitrificans (strain OS217 / ATCC BAA-1090 / DSM 15013).